A 759-amino-acid chain; its full sequence is 5-methyltetrahydropteroyltriglutamate--homocysteine methyltransferase (759 aa).

Residues 17 to 20 (RELK) and Lys116 each bind 5-methyltetrahydropteroyltri-L-glutamate. Residues 430 to 432 (IGS) and Glu483 contribute to the L-homocysteine site. L-methionine-binding positions include 430-432 (IGS) and Glu483. 5-methyltetrahydropteroyltri-L-glutamate-binding positions include 514-515 (RC) and Trp560. An L-homocysteine-binding site is contributed by Asp598. L-methionine is bound at residue Asp598. Glu604 provides a ligand contact to 5-methyltetrahydropteroyltri-L-glutamate. Residues His641, Cys643, and Glu665 each coordinate Zn(2+). Residue His694 is the Proton donor of the active site. Residue Cys726 participates in Zn(2+) binding.

This sequence belongs to the vitamin-B12 independent methionine synthase family. It depends on Zn(2+) as a cofactor.

The enzyme catalyses 5-methyltetrahydropteroyltri-L-glutamate + L-homocysteine = tetrahydropteroyltri-L-glutamate + L-methionine. It functions in the pathway amino-acid biosynthesis; L-methionine biosynthesis via de novo pathway; L-methionine from L-homocysteine (MetE route): step 1/1. In terms of biological role, catalyzes the transfer of a methyl group from 5-methyltetrahydrofolate to homocysteine resulting in methionine formation. This Lactococcus lactis subsp. lactis (strain IL1403) (Streptococcus lactis) protein is 5-methyltetrahydropteroyltriglutamate--homocysteine methyltransferase.